We begin with the raw amino-acid sequence, 553 residues long: Glutamine--tRNA ligase (553 aa).

The short motif at 34 to 44 is the 'HIGH' region element; it reads PEPNGYLHIGH. ATP-binding positions include 35–37 and 41–47; these read EPN and HIGHAKS. L-glutamine-binding residues include Asp68 and Tyr213. Residues Thr232 and 262–263 contribute to the ATP site; that span reads RL. The short motif at 269-273 is the 'KMSKS' region element; the sequence is LTSKR.

It belongs to the class-I aminoacyl-tRNA synthetase family. In terms of assembly, monomer.

It is found in the cytoplasm. The catalysed reaction is tRNA(Gln) + L-glutamine + ATP = L-glutaminyl-tRNA(Gln) + AMP + diphosphate. This Psychromonas ingrahamii (strain DSM 17664 / CCUG 51855 / 37) protein is Glutamine--tRNA ligase.